Reading from the N-terminus, the 61-residue chain is UPF0370 protein Spro_3503 (61 aa).

The chain crosses the membrane as a helical span at residues 3–23; that stretch reads WLADYWWIILLILVGMIISGI. The segment covering 38 to 48 has biased composition (basic and acidic residues); the sequence is KPELPPHRDNN. The tract at residues 38 to 61 is disordered; the sequence is KPELPPHRDNNAEWDDDDDWPKKK. The segment covering 49–61 has biased composition (acidic residues); it reads AEWDDDDDWPKKK.

Belongs to the UPF0370 family.

It is found in the cell membrane. The polypeptide is UPF0370 protein Spro_3503 (Serratia proteamaculans (strain 568)).